A 161-amino-acid polypeptide reads, in one-letter code: Regulator of ribonuclease activity A (161 aa).

The protein belongs to the RraA family. Homotrimer. Binds to both RNA-binding sites in the C-terminal region of Rne and to RhlB.

It localises to the cytoplasm. Globally modulates RNA abundance by binding to RNase E (Rne) and regulating its endonucleolytic activity. Can modulate Rne action in a substrate-dependent manner by altering the composition of the degradosome. Modulates RNA-binding and helicase activities of the degradosome. The polypeptide is Regulator of ribonuclease activity A (Escherichia fergusonii (strain ATCC 35469 / DSM 13698 / CCUG 18766 / IAM 14443 / JCM 21226 / LMG 7866 / NBRC 102419 / NCTC 12128 / CDC 0568-73)).